A 491-amino-acid chain; its full sequence is Nucleotidyltransferase MB21D2 (491 aa).

Residues 431 to 442 (RGSTTSIPSPQS) are compositionally biased toward polar residues. A disordered region spans residues 431 to 452 (RGSTTSIPSPQSDGGDPNQPDD). T435 carries the phosphothreonine modification. Residues S436, S439, and S442 each carry the phosphoserine modification.

Belongs to the mab-21 family.

Its function is as follows. Probable nucleotidyltransferase that catalyzes the formation of cyclic dinucleotide second messenger in response to some unknown stimulus. This Homo sapiens (Human) protein is Nucleotidyltransferase MB21D2.